The following is a 54-amino-acid chain: Large ribosomal subunit protein bL33A (54 aa).

Belongs to the bacterial ribosomal protein bL33 family.

The protein is Large ribosomal subunit protein bL33A of Mycobacterium marinum (strain ATCC BAA-535 / M).